The following is a 242-amino-acid chain: Small ribosomal subunit protein uS3 (242 aa).

One can recognise a KH type-2 domain in the interval 39 to 110 (IRKFIHKKYG…QVRINVVEVE (72 aa)). The disordered stretch occupies residues 216-242 (QPMPVGAAPRRRASRRPQQFEDRSNEG). Residues 233–242 (QQFEDRSNEG) show a composition bias toward basic and acidic residues.

This sequence belongs to the universal ribosomal protein uS3 family. As to quaternary structure, part of the 30S ribosomal subunit. Forms a tight complex with proteins S10 and S14.

Binds the lower part of the 30S subunit head. Binds mRNA in the 70S ribosome, positioning it for translation. This is Small ribosomal subunit protein uS3 from Synechococcus sp. (strain CC9605).